Consider the following 156-residue polypeptide: SsrA-binding protein (156 aa).

It belongs to the SmpB family.

It is found in the cytoplasm. Its function is as follows. Required for rescue of stalled ribosomes mediated by trans-translation. Binds to transfer-messenger RNA (tmRNA), required for stable association of tmRNA with ribosomes. tmRNA and SmpB together mimic tRNA shape, replacing the anticodon stem-loop with SmpB. tmRNA is encoded by the ssrA gene; the 2 termini fold to resemble tRNA(Ala) and it encodes a 'tag peptide', a short internal open reading frame. During trans-translation Ala-aminoacylated tmRNA acts like a tRNA, entering the A-site of stalled ribosomes, displacing the stalled mRNA. The ribosome then switches to translate the ORF on the tmRNA; the nascent peptide is terminated with the 'tag peptide' encoded by the tmRNA and targeted for degradation. The ribosome is freed to recommence translation, which seems to be the essential function of trans-translation. The sequence is that of SsrA-binding protein from Bacillus velezensis (strain DSM 23117 / BGSC 10A6 / LMG 26770 / FZB42) (Bacillus amyloliquefaciens subsp. plantarum).